Consider the following 401-residue polypeptide: L-rhamnonate dehydratase (401 aa).

His-29 and Arg-55 together coordinate substrate. 3 residues coordinate Mg(2+): Asp-222, Glu-248, and Glu-276. His-325 functions as the Proton acceptor in the catalytic mechanism. A substrate-binding site is contributed by Glu-345.

Belongs to the mandelate racemase/muconate lactonizing enzyme family. RhamD subfamily. In terms of assembly, homooctamer; tetramer of dimers. Mg(2+) is required as a cofactor.

The catalysed reaction is L-rhamnonate = 2-dehydro-3-deoxy-L-rhamnonate + H2O. Its function is as follows. Catalyzes the dehydration of L-rhamnonate to 2-keto-3-deoxy-L-rhamnonate (KDR). This is L-rhamnonate dehydratase from Klebsiella pneumoniae subsp. pneumoniae (strain ATCC 700721 / MGH 78578).